We begin with the raw amino-acid sequence, 1479 residues long: ABC transporter ecdL (1479 aa).

The next 3 helical transmembrane spans lie at 32 to 52, 82 to 102, and 142 to 162; these read LLFEESILYLPPLLIAASVAL, LSNAAIAIGFVASPIFAWLSF, and IASIFATIVVCKVVLLVVEAM. N-linked (GlcNAc...) asparagine glycosylation is found at Asn-183 and Asn-234. The next 2 membrane-spanning stretches (helical) occupy residues 251–271 and 291–311; these read WGGFLPRLCLIGVNYAQPFLV and SGLIAAYAIVYMGIAVATAAF. Positions 258–535 constitute an ABC transmembrane type-1 1 domain; sequence LCLIGVNYAQ…FVESLMGLRQ (278 aa). Asn-345 carries an N-linked (GlcNAc...) asparagine glycan. Transmembrane regions (helical) follow at residues 365–382 and 391–411; these read LHETWASLIEIALSLWLL and VAAAMVVLVCLLVSGALSGLL. N-linked (GlcNAc...) asparagine glycosylation occurs at Asn-427. 2 consecutive transmembrane segments (helical) span residues 469-489 and 503-523; these read LLVALVTLSYLSTTMAPTFAF and PLLAAPAFSSLTIMTLLGQAV. Residues 607–835 form the ABC transporter 1 domain; sequence IVLQNHTASW…GSSLRLEELV (229 aa). Asn-611 and Asn-628 each carry an N-linked (GlcNAc...) asparagine glycan. 641–648 is an ATP binding site; the sequence is GPIGSGKS. N-linked (GlcNAc...) asparagine glycans are attached at residues Asn-793 and Asn-797. The next 5 membrane-spanning stretches (helical) occupy residues 885-905, 955-975, 1028-1048, 1052-1072, and 1135-1155; these read TIGWGSWWIFIVLCSGFVVAL, LFAVWSALAITFFLGACLHLM, ALIGAVIALILCISAMAVIVY, YLAATIPGLLGLLYLVQMFYL, and IWLTLTLDIIVAFLAIILVSI. Residues 932 to 1193 form the ABC transmembrane type-1 2 domain; the sequence is IWLKFWTEAN…LVYNWTALEN (262 aa). Asn-1161 carries an N-linked (GlcNAc...) asparagine glycan. Residues 1165-1185 traverse the membrane as a helical segment; sequence ASIGLALVNLIAFGANMKGLV. Asn-1187 carries N-linked (GlcNAc...) asparagine glycosylation. Residues 1230–1461 form the ABC transporter 2 domain; it reads IKFKSVTASY…RSIFASLLRS (232 aa). 1264 to 1271 serves as a coordination point for ATP; sequence GRTGCGKS. Positions 1460–1479 are disordered; that stretch reads RSGDEEPGNGHKHESEGEEE. Over residues 1461–1479 the composition is skewed to basic and acidic residues; it reads SGDEEPGNGHKHESEGEEE.

Belongs to the ABC transporter superfamily. ABCC family. Conjugate transporter (TC 3.A.1.208) subfamily.

Its subcellular location is the cell membrane. Its function is as follows. ABC transporter; part of the gene cluster that mediates the biosynthesis of echinocandin B, a fungal lipidated cyclic hexapeptide that acts as an antifungal agent. In Aspergillus rugulosus (Emericella rugulosa), this protein is ABC transporter ecdL.